The chain runs to 552 residues: Alpha-galactosidase (552 aa).

Substrate-binding positions include Trp65, Tyr191, 220–221 (DD), 325–327 (KID), Cys368, and Arg383. The active-site Nucleophile is Asp327. The active-site Proton donor/acceptor is the Asp387.

It belongs to the glycosyl hydrolase 36 family. As to quaternary structure, homodimer.

It catalyses the reaction Hydrolysis of terminal, non-reducing alpha-D-galactose residues in alpha-D-galactosides, including galactose oligosaccharides, galactomannans and galactolipids.. With respect to regulation, inhibited by hydrolysis product alpha-galactopyranose and to a lesser extent by beta-galactopyranose, its mutarotational product. Inhibited by synthetic cyclopropyl carbasugars. Its function is as follows. Hydrolyzes the short-chain alpha-galactosaccharides raffinose, melibiose and stachyose. In Thermotoga maritima (strain ATCC 43589 / DSM 3109 / JCM 10099 / NBRC 100826 / MSB8), this protein is Alpha-galactosidase.